The chain runs to 754 residues: ToMV resistance protein Tm-1(GCR237) (754 aa).

Positions 1-201 are N-terminal inhibitory domain NN; that stretch reads MATAQSNSPR…AGMVIGRLES (201 aa). ATP-binding positions include 18-20, threonine 55, arginine 92, and 124-127; these read DTK and GSGG. The tract at residues 211–431 is N-terminal inhibitory domain NC; it reads KFTVGVTMFG…VDSFLEISPK (221 aa).

It belongs to the UPF0261 family. In terms of assembly, homodimer. (Microbial infection) Binds, via an ATP bridge, to the tobamoviruses avirulent (Avr) replication proteins (large and small subunits, e.g. tomato mosaic virus (ToMV/TMV) AC P03587, tobacco mild green mosaic virus (TMGMV) AC P18339 and pepper mild mottle virus (PMMoV) AC P89657) to inhibit their function after the translation of tobamoviruses RNA, but before the viral replication complex formation on the membrane surfaces; this interaction is not possible with resistance-breaking strains replication proteins.

Functionally, inhibitor of viral RNA replication which confers resistance to some tobamoviruses including tomato mosaic virus (ToMV) (e.g. isolate L), tobacco mosaic virus (TMV), tobacco mild green mosaic virus (TMGMV) and pepper mild mottle virus (PMMoV), but not to resistance-breaking isolates of ToMV (e.g. LT1, SL-1 and ToMV1-2) and tomato brown rugose fruit virus (ToBRFV). Prevents tobamoviruses RNA replication by affecting the association of tobamoviruses replication proteins (large and small subunits) with host membrane-associated proteins (e.g. TOM1, TOM2A and ARL8), thus inhibiting the replication complex formation on the membranes and avoiding viral negative-strand RNA synthesis. Inhibits triphosphatase activity of ToMV replication proteins. This chain is ToMV resistance protein Tm-1(GCR237), found in Solanum lycopersicum (Tomato).